We begin with the raw amino-acid sequence, 99 residues long: Large ribosomal subunit protein uL23 (99 aa).

This sequence belongs to the universal ribosomal protein uL23 family. Part of the 50S ribosomal subunit. Contacts protein L29, and trigger factor when it is bound to the ribosome.

Its function is as follows. One of the early assembly proteins it binds 23S rRNA. One of the proteins that surrounds the polypeptide exit tunnel on the outside of the ribosome. Forms the main docking site for trigger factor binding to the ribosome. The polypeptide is Large ribosomal subunit protein uL23 (Azotobacter vinelandii (strain DJ / ATCC BAA-1303)).